The chain runs to 203 residues: Lectin (203 aa).

Residues 1-20 (MINILHVIAGLALASVGVDA) form the signal peptide. A propeptide spanning residues 21–53 (RQVGVGADVLHAVENTIDSITGVEASHSALEVG) is cleaved from the precursor.

In terms of assembly, monomer.

In terms of biological role, N-acetyl-D-glucosamine-specific lectin. Specifically agglutinates rabbit erythrocytes. This Ulva pertusa (Sea lettuce) protein is Lectin (UPL1).